The chain runs to 336 residues: Glucokinase (336 aa).

12-17 (ADIGGT) contributes to the ATP binding site.

It belongs to the bacterial glucokinase family.

It localises to the cytoplasm. It carries out the reaction D-glucose + ATP = D-glucose 6-phosphate + ADP + H(+). In Helicobacter pylori (strain ATCC 700392 / 26695) (Campylobacter pylori), this protein is Glucokinase.